The sequence spans 105 residues: Cytochrome c-553-like (105 aa).

The first 29 residues, 1-29 (MAGIVSLVILAVALFSFMNFDPYVSQVLA), serve as a signal peptide directing secretion. Heme c contacts are provided by cysteine 45, cysteine 48, histidine 49, and methionine 85.

Post-translationally, binds 1 heme c group covalently per subunit.

In Synechocystis sp. (strain ATCC 27184 / PCC 6803 / Kazusa), this protein is Cytochrome c-553-like (cytM).